The following is a 281-amino-acid chain: Para-Rep C1 (281 aa).

One can recognise a CRESS-DNA virus Rep endonuclease domain in the interval 3–97 (TLQGTFWCFT…VAGPWTYGEL (95 aa)). Residues 10–13 (CFTL) carry the RCR-1 motif. Residues E36 and H42 each contribute to the a divalent metal cation site. An RCR-2 motif is present at residues 42–44 (HLQ). A Nuclear localization signal motif is present at residues 51-71 (KRSTLKMMKELLPGAHLEVSK). Residue Y80 is the For DNA cleavage activity of the active site. The RCR-3 signature appears at 80-83 (YAMK). Residue E85 coordinates a divalent metal cation. The Nuclear localization signal motif lies at 97-103 (LLKKGSN). Residue 173-181 (GPQGGEGKT) coordinates ATP.

It belongs to the nanoviridea/circoviridae replication-associated protein family. Homooligomer (Potential). Rep binds to repeated DNA motifs (iterons). Requires Mg(2+) as cofactor. Mn(2+) is required as a cofactor.

Its subcellular location is the host nucleus. The enzyme catalyses ATP + H2O = ADP + phosphate + H(+). In terms of biological role, initiates and terminates the replication only of its own subviral DNA molecule. The closed circular ssDNA genome is first converted to a superhelical dsDNA. Rep binds a specific hairpin at the genome origin of replication. Introduces an endonucleolytic nick within the intergenic region of the genome, thereby initiating the rolling circle replication (RCR). Following cleavage, binds covalently to the 5'-phosphate of DNA as a tyrosyl ester. The cleavage gives rise to a free 3'-OH that serves as a primer for the cellular DNA polymerase. The polymerase synthesizes the (+) strand DNA by rolling circle mechanism. After one round of replication, a Rep-catalyzed nucleotidyl transfer reaction releases a circular single-stranded virus genome, thereby terminating the replication. Displays origin-specific DNA cleavage, nucleotidyl transferase, ATPase and helicase activities. The sequence is that of Para-Rep C1 (C1) from Milk vetch dwarf C1 alphasatellite (MVDC1A).